Reading from the N-terminus, the 162-residue chain is Ribosome maturation factor RimP (162 aa).

Belongs to the RimP family.

It is found in the cytoplasm. Its function is as follows. Required for maturation of 30S ribosomal subunits. This is Ribosome maturation factor RimP from Ralstonia nicotianae (strain ATCC BAA-1114 / GMI1000) (Ralstonia solanacearum).